The sequence spans 134 residues: UPF0102 protein Dvul_2148 (134 aa).

The protein belongs to the UPF0102 family.

This chain is UPF0102 protein Dvul_2148, found in Nitratidesulfovibrio vulgaris (strain DP4) (Desulfovibrio vulgaris).